Here is a 496-residue protein sequence, read N- to C-terminus: MIPVVALVGRPNVGKSTLFNRLTRSRDALVADFPGLTRDRKYGQAKVGEHDFIVIDTGGIDGSEEGVETKMAEQSLAAIREADVVLFMVDGRAGLTPSDEAIAAHLRKIEKATMLVVNKVDGIDADAASADFWQLGVDEMYQIAAAHGRGVTALIERALDPFFDNLLSANNEGEIEDLTDMEDEDAEQQEYSEEDAEESLKRLQDQPIKLAIIGRPNVGKSTLTNRILGEERVVVYDMPGTTRDSIYIPMERDGREYVLIDTAGVRRRGKVHETVEKFSVVKTLKAVEDANVVLLVIDARENISDQDLSLLGFALNAGRSIVLAVNKWDGLDNEVKENVKKELDRRLGFVDFARIHFISALHGTGVGHLFESVQEAYRSATTRVGTSVLTRIMKMATEDHQPPMVRGRRVKLKYAHAGGYNPPIVVIHGNQVRELPDSYKRYLMNYFRKSLDIMGTPIRIQFQNSDNPFENRVNKMTLSQERARKRMMSAVKNRKK.

EngA-type G domains follow at residues 3–166 (PVVA…FDNL) and 208–381 (IKLA…RSAT). Residues 9-16 (GRPNVGKS), 56-60 (DTGGI), 118-121 (NKVD), 214-221 (GRPNVGKS), 261-265 (DTAGV), and 326-329 (NKWD) contribute to the GTP site. A KH-like domain is found at 382–466 (TRVGTSVLTR…PIRIQFQNSD (85 aa)).

Belongs to the TRAFAC class TrmE-Era-EngA-EngB-Septin-like GTPase superfamily. EngA (Der) GTPase family. As to quaternary structure, associates with the 50S ribosomal subunit.

Functionally, GTPase that plays an essential role in the late steps of ribosome biogenesis. This Vibrio vulnificus (strain CMCP6) protein is GTPase Der.